We begin with the raw amino-acid sequence, 104 residues long: Large ribosomal subunit protein eL42 (104 aa).

This sequence belongs to the eukaryotic ribosomal protein eL42 family. Component of the large ribosomal subunit. Mature ribosomes consist of a small (40S) and a large (60S) subunit. The 40S subunit contains about 32 different proteins and 1 molecule of RNA (18S). The 60S subunit contains about 42 different proteins and 3 molecules of RNA (28S, 5.8S and 5S).

It localises to the cytoplasm. In terms of biological role, component of the ribosome, a large ribonucleoprotein complex responsible for the synthesis of proteins in the cell. The small ribosomal subunit (SSU) binds messenger RNAs (mRNAs) and translates the encoded message by selecting cognate aminoacyl-transfer RNA (tRNA) molecules. The large subunit (LSU) contains the ribosomal catalytic site termed the peptidyl transferase center (PTC), which catalyzes the formation of peptide bonds, thereby polymerizing the amino acids delivered by tRNAs into a polypeptide chain. The nascent polypeptides leave the ribosome through a tunnel in the LSU and interact with protein factors that function in enzymatic processing, targeting, and the membrane insertion of nascent chains at the exit of the ribosomal tunnel. This chain is Large ribosomal subunit protein eL42, found in Plasmodium falciparum (isolate 3D7).